Here is a 565-residue protein sequence, read N- to C-terminus: Probable serine/threonine-protein kinase abkA (565 aa).

A coiled-coil region spans residues 44–77; it reads NNNNISLKDKFKDLKDLKDNLNEKKINNDNDDDD. The Protein kinase domain occupies 231 to 565; that stretch reads LFQDDPIAAA…FKNIFYKNYK (335 aa). ATP-binding positions include 237–245 and K259; that span reads IAAASIGQV. Residue D401 is the Proton acceptor of the active site.

Belongs to the protein kinase superfamily. ADCK protein kinase family.

The chain is Probable serine/threonine-protein kinase abkA (abkA) from Dictyostelium discoideum (Social amoeba).